Here is a 244-residue protein sequence, read N- to C-terminus: Thiol S-methyltransferase TMT1B (244 aa).

The N-terminal stretch at Met-1–Ala-23 is a signal peptide.

It belongs to the methyltransferase superfamily. Highly expressed in liver and kidney. No expression in testis, heart, lung, brain, spleen or cultured fibroblasts.

The protein resides in the endoplasmic reticulum membrane. Its subcellular location is the lipid droplet. It localises to the microsome. It is found in the cytoplasm. The protein localises to the cytosol. It carries out the reaction a thiol + S-adenosyl-L-methionine = a methyl thioether + S-adenosyl-L-homocysteine + H(+). Its function is as follows. Thiol S-methyltransferase that catalyzes the transfer of a methyl group from S-adenosyl-L-methionine to alkyl and phenolic thiol-containing acceptor substrates. Together with TMT1B accounts for most of S-thiol methylation activity in the endoplasmic reticulum of hepatocytes. Selectively methylates S-centered nucleophiles from metabolites such as hydrogen sulfide and dithiothreitol. In Rattus norvegicus (Rat), this protein is Thiol S-methyltransferase TMT1B (Tmt1b).